The chain runs to 122 residues: MIQQQTYLNVADNSGARKLMCLRVLGTGNCTYGGIGDKIIAVVKDAIPNMPVKKSDVVTAVIVRTRQTVRRDSGMSIRFDDNAAVIINNDGNPKGTRVFGPVARELRDKNYTKIVSLAPEVL.

This sequence belongs to the universal ribosomal protein uL14 family. As to quaternary structure, part of the 50S ribosomal subunit. Forms a cluster with proteins L3 and L19. In the 70S ribosome, L14 and L19 interact and together make contacts with the 16S rRNA in bridges B5 and B8.

Binds to 23S rRNA. Forms part of two intersubunit bridges in the 70S ribosome. This chain is Large ribosomal subunit protein uL14, found in Microcystis aeruginosa (strain NIES-843 / IAM M-2473).